A 752-amino-acid chain; its full sequence is Zinc finger BED domain-containing protein RICESLEEPER 3 (752 aa).

The BED-type zinc-finger motif lies at 106-166; it reads RKKSVVWEHF…ASCPMLKNED (61 aa). Positions 129, 132, 153, and 159 each coordinate Zn(2+). The segment at 647–733 is HATC (Hobo-Ac-Tam3) domain; the sequence is ELEQYLEEAL…EALFCAKDWL (87 aa).

As to quaternary structure, homodimer.

It localises to the nucleus. In terms of biological role, transposase-like protein that is essential for plant growth and development. May regulate global gene expression by recruiting other cellular factors. The chain is Zinc finger BED domain-containing protein RICESLEEPER 3 from Oryza sativa subsp. japonica (Rice).